The chain runs to 225 residues: Protein-L-isoaspartate O-methyltransferase (225 aa).

The active site involves serine 63.

Belongs to the methyltransferase superfamily. L-isoaspartyl/D-aspartyl protein methyltransferase family.

It is found in the cytoplasm. It catalyses the reaction [protein]-L-isoaspartate + S-adenosyl-L-methionine = [protein]-L-isoaspartate alpha-methyl ester + S-adenosyl-L-homocysteine. Catalyzes the methyl esterification of L-isoaspartyl residues in peptides and proteins that result from spontaneous decomposition of normal L-aspartyl and L-asparaginyl residues. It plays a role in the repair and/or degradation of damaged proteins. This is Protein-L-isoaspartate O-methyltransferase from Staphylothermus marinus (strain ATCC 43588 / DSM 3639 / JCM 9404 / F1).